Consider the following 142-residue polypeptide: Putative pre-16S rRNA nuclease (142 aa).

It belongs to the YqgF nuclease family.

Its subcellular location is the cytoplasm. Functionally, could be a nuclease involved in processing of the 5'-end of pre-16S rRNA. This is Putative pre-16S rRNA nuclease from Saccharophagus degradans (strain 2-40 / ATCC 43961 / DSM 17024).